Here is an 849-residue protein sequence, read N- to C-terminus: Leucine--tRNA ligase (849 aa).

The 'HIGH' region motif lies at 44-54 (PYPSGRIHMGH). A 'KMSKS' region motif is present at residues 620–624 (KMSKS). Position 623 (Lys-623) interacts with ATP.

This sequence belongs to the class-I aminoacyl-tRNA synthetase family.

The protein localises to the cytoplasm. It carries out the reaction tRNA(Leu) + L-leucine + ATP = L-leucyl-tRNA(Leu) + AMP + diphosphate. This is Leucine--tRNA ligase from Sphingopyxis alaskensis (strain DSM 13593 / LMG 18877 / RB2256) (Sphingomonas alaskensis).